We begin with the raw amino-acid sequence, 496 residues long: Cytochrome P450 monooxygenase cle4 (496 aa).

A helical transmembrane segment spans residues 12-34; the sequence is FFTSPFPLTVGILSISLSGVLWY. Cys-435 is a binding site for heme.

Belongs to the cytochrome P450 family. The cofactor is heme.

The protein localises to the membrane. It functions in the pathway secondary metabolite biosynthesis; terpenoid biosynthesis. Functionally, cytochrome P450 monooxygenase; part of the cluster A that mediates the biosynthesis of chevalone E and its oxidized derivatives that possess a unique five-membered lactone ring and can synergistically enhance the cytotoxicity of doxorubicin (DOX) in breast cancer cells. Within the pathway, cle4 is involved in hydroxylation of the chavalone E scaffold at positions C-11 and C-12 and contributes with cle2 to the production of seven oxidation derivatives. The molecular scaffold is commonly biosynthesized by a series of enzymes including the non-reducing polyketide synthase (NR-PKS) cle1 that produces the alpha-pyrone triacetic acid lactone (TAL); The membrane-bound prenyltransferase cle5 that accepts TAL as its substrate to perform a C-3 geranylgeranylation reaction, in which the pathway-dedicated GGPS cle6 is required to provide GGPP, the other substrate of cle5; the FAD-dependent monooxygenase Cle3 that forms an (S)-epoxide ring at the terminal olefin of the geranylgeranyl group; and the terpene cyclase Cle7 that catalyzes the cyclization of the prenyl group that yields the pentacyclic pathway intermediate chevalone E. Chevalone E can derivatize into seven new oxidized analogs by the cytochrome P450 monooxygenases cle2 (acting at C-20) and cle4 (acting at C-11 and C-12). This is Cytochrome P450 monooxygenase cle4 from Aspergillus versicolor.